The following is a 502-amino-acid chain: Cytochrome c-552 (502 aa).

An N-terminal signal peptide occupies residues 1–25 (MKYLTKSRVIATIAMLGCLSVSAWA). His-105 provides a ligand contact to heme c. 3 residues coordinate heme: Cys-133, Cys-136, and Lys-137. Heme c-binding residues include Cys-171, Cys-174, His-175, Cys-220, Cys-223, and His-224. Ca(2+) is bound by residues Glu-226, Tyr-227, Lys-271, and Gln-273. Tyr-227 provides a ligand contact to substrate. His-274 provides a ligand contact to substrate. 9 residues coordinate heme c: His-285, Cys-292, Cys-295, His-296, His-311, Cys-324, Cys-327, His-328, and His-403. The disordered stretch occupies residues 481 to 502 (RERGLLPEVTPKSVTTPKVDAK).

Belongs to the cytochrome c-552 family. The cofactor is Ca(2+). Requires heme c as cofactor.

It is found in the periplasm. It catalyses the reaction 6 Fe(III)-[cytochrome c] + NH4(+) + 2 H2O = 6 Fe(II)-[cytochrome c] + nitrite + 8 H(+). The protein operates within nitrogen metabolism; nitrate reduction (assimilation). In terms of biological role, catalyzes the reduction of nitrite to ammonia, consuming six electrons in the process. This is Cytochrome c-552 from Haemophilus ducreyi (strain 35000HP / ATCC 700724).